The following is a 159-amino-acid chain: MAGFMKNAMSYLGMSDVVDDEDDYIEEDEEQKPASKSAFDSDHTVTPLASTTAPAASSTTKPFPGGRVNRITTIHPKSYEDAQLVGRALRDGVPVVLNLTGVAEAVAYRIVDFSAGVVFGVRGSLERVTPRVFLLSPAQVNIKVEEPTKPASAHDLFAD.

Positions 23-69 (DYIEEDEEQKPASKSAFDSDHTVTPLASTTAPAASSTTKPFPGGRVN) are disordered. Low complexity predominate over residues 44 to 64 (TVTPLASTTAPAASSTTKPFP).

This sequence belongs to the SepF family. Homodimer. Interacts with FtsZ.

Its subcellular location is the cytoplasm. Its function is as follows. Cell division protein that is part of the divisome complex and is recruited early to the Z-ring. Probably stimulates Z-ring formation, perhaps through the cross-linking of FtsZ protofilaments. Its function overlaps with FtsA. The sequence is that of Cell division protein SepF from Bifidobacterium longum (strain DJO10A).